The following is a 503-amino-acid chain: Probable DNA double-strand break repair helicase HerA (503 aa).

ATP contacts are provided by residues R122, 131–136 (GGGKSN), and 478–479 (KI).

Belongs to the HerA family.

It carries out the reaction Couples ATP hydrolysis with the unwinding of duplex DNA at the replication fork by translocating in the 5'-3' direction. This creates two antiparallel DNA single strands (ssDNA). The leading ssDNA polymer is the template for DNA polymerase III holoenzyme which synthesizes a continuous strand.. It catalyses the reaction ATP + H2O = ADP + phosphate + H(+). The catalysed reaction is Couples ATP hydrolysis with the unwinding of duplex DNA by translocating in the 3'-5' direction.. Involved in DNA double-strand break (DSB) repair. Probably acts with NurA to stimulate resection of the 5' strand and produce the long 3' single-strand that is required for RadA loading. Has DNA-dependent ATPase activity and DNA helicase activity. This is Probable DNA double-strand break repair helicase HerA from Methanocaldococcus jannaschii (strain ATCC 43067 / DSM 2661 / JAL-1 / JCM 10045 / NBRC 100440) (Methanococcus jannaschii).